Here is a 590-residue protein sequence, read N- to C-terminus: Probable metalloendopeptidase G1-type (590 aa).

His-41 contacts Zn(2+). Glu-44 is an active-site residue. Residue His-45 coordinates Zn(2+).

This sequence belongs to the peptidase M44 family. It depends on Zn(2+) as a cofactor.

Its function is as follows. Seems to be involved in viral proteins maturation by cleavage at Ala-Gly-|-Xaa motifs. The chain is Probable metalloendopeptidase G1-type from Oryctolagus cuniculus (Rabbit).